We begin with the raw amino-acid sequence, 425 residues long: Adenylosuccinate synthetase (425 aa).

Residues 12 to 18 and 40 to 42 each bind GTP; these read GDEGKGK and GHT. The active-site Proton acceptor is the D13. Mg(2+)-binding residues include D13 and G40. Residues 13–16, 38–41, T130, R144, Q224, T239, and R301 each bind IMP; these read DEGK and NAGH. Catalysis depends on H41, which acts as the Proton donor. Substrate is bound at residue 297-303; the sequence is TVSNRRR. GTP contacts are provided by residues R303, 329-331, and 411-413; these read KLD and STS.

It belongs to the adenylosuccinate synthetase family. As to quaternary structure, homodimer. It depends on Mg(2+) as a cofactor.

It is found in the cytoplasm. It catalyses the reaction IMP + L-aspartate + GTP = N(6)-(1,2-dicarboxyethyl)-AMP + GDP + phosphate + 2 H(+). It functions in the pathway purine metabolism; AMP biosynthesis via de novo pathway; AMP from IMP: step 1/2. In terms of biological role, plays an important role in the de novo pathway of purine nucleotide biosynthesis. Catalyzes the first committed step in the biosynthesis of AMP from IMP. The chain is Adenylosuccinate synthetase from Wolbachia pipientis subsp. Culex pipiens (strain wPip).